Reading from the N-terminus, the 532-residue chain is SET and MYND domain-containing protein DDB_G0288495 (532 aa).

The 424-residue stretch at 25 to 448 (PWIEVKSVSE…ENQELLITYI (424 aa)) folds into the SET domain. Residues 70–116 (CTTCFKILLESNRHNFQTCPSCFQVNYCSNYCKQYSKIETKHTELEC) form an MYND-type; degenerate zinc finger. Residues 199 to 240 (INSKNNNEFENEEEEEEEQEQKGEGEQEENENNENNEKVKKK) adopt a coiled-coil conformation. The disordered stretch occupies residues 204–234 (NNEFENEEEEEEEQEQKGEGEQEENENNENN). Over residues 207-217 (FENEEEEEEEQ) the composition is skewed to acidic residues.

The protein belongs to the class V-like SAM-binding methyltransferase superfamily.

Functionally, probable methyltransferase. The polypeptide is SET and MYND domain-containing protein DDB_G0288495 (Dictyostelium discoideum (Social amoeba)).